The primary structure comprises 400 residues: Acetylornithine aminotransferase (400 aa).

Pyridoxal 5'-phosphate-binding positions include 113-114 and F139; that span reads GA. Position 142 (R142) interacts with N(2)-acetyl-L-ornithine. 224-227 is a binding site for pyridoxal 5'-phosphate; sequence DEVQ. The residue at position 253 (K253) is an N6-(pyridoxal phosphate)lysine. S281 is a N(2)-acetyl-L-ornithine binding site. Position 282 (T282) interacts with pyridoxal 5'-phosphate.

The protein belongs to the class-III pyridoxal-phosphate-dependent aminotransferase family. ArgD subfamily. Homodimer. Pyridoxal 5'-phosphate serves as cofactor.

It is found in the cytoplasm. It carries out the reaction N(2)-acetyl-L-ornithine + 2-oxoglutarate = N-acetyl-L-glutamate 5-semialdehyde + L-glutamate. It participates in amino-acid biosynthesis; L-arginine biosynthesis; N(2)-acetyl-L-ornithine from L-glutamate: step 4/4. This is Acetylornithine aminotransferase from Mycobacterium bovis (strain ATCC BAA-935 / AF2122/97).